A 238-amino-acid polypeptide reads, in one-letter code: Probable transcriptional regulatory protein M6_Spy0297 (238 aa).

This sequence belongs to the TACO1 family. YeeN subfamily.

The protein localises to the cytoplasm. The protein is Probable transcriptional regulatory protein M6_Spy0297 of Streptococcus pyogenes serotype M6 (strain ATCC BAA-946 / MGAS10394).